We begin with the raw amino-acid sequence, 114 residues long: T cell receptor beta variable 5-1 (114 aa).

The signal sequence occupies residues 1–21; that stretch reads MGSRLLCWVLLCLLGAGPVKA. One can recognise an Ig-like domain in the interval 22–114; that stretch reads GVTQTPRYLI…SALYLCASSL (93 aa). Cys-42 and Cys-110 are joined by a disulfide. N-linked (GlcNAc...) asparagine glycosylation is present at Asn-96.

Alpha-beta TR is a heterodimer composed of an alpha and beta chain; disulfide-linked. The alpha-beta TR is associated with the transmembrane signaling CD3 coreceptor proteins to form the TR-CD3 (TcR or TCR). The assembly of alpha-beta TR heterodimers with CD3 occurs in the endoplasmic reticulum where a single alpha-beta TR heterodimer associates with one CD3D-CD3E heterodimer, one CD3G-CD3E heterodimer and one CD247 homodimer forming a stable octameric structure. CD3D-CD3E and CD3G-CD3E heterodimers preferentially associate with TR alpha and TR beta chains, respectively. The association of the CD247 homodimer is the last step of TcR assembly in the endoplasmic reticulum and is required for transport to the cell surface.

The protein localises to the cell membrane. Functionally, v region of the variable domain of T cell receptor (TR) beta chain that participates in the antigen recognition. Alpha-beta T cell receptors are antigen specific receptors which are essential to the immune response and are present on the cell surface of T lymphocytes. Recognize peptide-major histocompatibility (MH) (pMH) complexes that are displayed by antigen presenting cells (APC), a prerequisite for efficient T cell adaptive immunity against pathogens. Binding of alpha-beta TR to pMH complex initiates TR-CD3 clustering on the cell surface and intracellular activation of LCK that phosphorylates the ITAM motifs of CD3G, CD3D, CD3E and CD247 enabling the recruitment of ZAP70. In turn ZAP70 phosphorylates LAT, which recruits numerous signaling molecules to form the LAT signalosome. The LAT signalosome propagates signal branching to three major signaling pathways, the calcium, the mitogen-activated protein kinase (MAPK) kinase and the nuclear factor NF-kappa-B (NF-kB) pathways, leading to the mobilization of transcription factors that are critical for gene expression and essential for T cell growth and differentiation. The T cell repertoire is generated in the thymus, by V-(D)-J rearrangement. This repertoire is then shaped by intrathymic selection events to generate a peripheral T cell pool of self-MH restricted, non-autoaggressive T cells. Post-thymic interaction of alpha-beta TR with the pMH complexes shapes TR structural and functional avidity. The protein is T cell receptor beta variable 5-1 of Homo sapiens (Human).